We begin with the raw amino-acid sequence, 103 residues long: Putative protein YmfH (103 aa).

Residues methionine 1–glycine 34 form a disordered region. Basic and acidic residues predominate over residues valine 10–valine 20. A run of 2 helical transmembrane segments spans residues methionine 42–phenylalanine 62 and glycine 73–glutamate 93.

The protein resides in the cell inner membrane. This is Putative protein YmfH (ymfH) from Escherichia coli (strain K12).